The primary structure comprises 247 residues: 2,3-bisphosphoglycerate-dependent phosphoglycerate mutase (247 aa).

Substrate contacts are provided by residues 8–15 (RHGESQWN), 21–22 (TG), Arg60, 87–90 (ERHY), Lys98, 114–115 (RR), and 183–184 (GN). The Tele-phosphohistidine intermediate role is filled by His9. The active-site Proton donor/acceptor is the Glu87.

It belongs to the phosphoglycerate mutase family. BPG-dependent PGAM subfamily.

It catalyses the reaction (2R)-2-phosphoglycerate = (2R)-3-phosphoglycerate. The protein operates within carbohydrate degradation; glycolysis; pyruvate from D-glyceraldehyde 3-phosphate: step 3/5. Catalyzes the interconversion of 2-phosphoglycerate and 3-phosphoglycerate. This chain is 2,3-bisphosphoglycerate-dependent phosphoglycerate mutase, found in Prosthecochloris aestuarii (strain DSM 271 / SK 413).